Here is a 288-residue protein sequence, read N- to C-terminus: 4-hydroxybenzoate octaprenyltransferase (288 aa).

8 helical membrane passes run 23-43 (IGSLLLLWPTLWALWLAGKGI), 46-66 (TKILIVFVLGVFFMRAAGCVV), 98-118 (ILFVVLVLLSFGLVLTLNSMT), 141-161 (LPQVVLGAAFGWSIPMGFAAV), 165-185 (LPLVCWLLLLANICWTVAYDT), 213-233 (LIIGLLQLATLVLMVTIGWLM), 234-254 (NLGGAFYWSILLAGALFVHQQ), and 268-288 (AFLNNNYVGLVLFLGIFISYL).

The protein belongs to the UbiA prenyltransferase family. Requires Mg(2+) as cofactor.

The protein resides in the cell inner membrane. It carries out the reaction all-trans-octaprenyl diphosphate + 4-hydroxybenzoate = 4-hydroxy-3-(all-trans-octaprenyl)benzoate + diphosphate. It functions in the pathway cofactor biosynthesis; ubiquinone biosynthesis. Its function is as follows. Catalyzes the prenylation of para-hydroxybenzoate (PHB) with an all-trans polyprenyl group. Mediates the second step in the final reaction sequence of ubiquinone-8 (UQ-8) biosynthesis, which is the condensation of the polyisoprenoid side chain with PHB, generating the first membrane-bound Q intermediate 3-octaprenyl-4-hydroxybenzoate. This chain is 4-hydroxybenzoate octaprenyltransferase, found in Yersinia enterocolitica serotype O:8 / biotype 1B (strain NCTC 13174 / 8081).